We begin with the raw amino-acid sequence, 126 residues long: Diadenosine hexaphosphate hydrolase (126 aa).

The region spanning 1-121 (MELGAGGVVF…EDLGLLEVAL (121 aa)) is the Nudix hydrolase domain. Substrate-binding positions include 21 to 23 (DRM) and 30 to 32 (KGH). The Nudix box motif lies at 31 to 52 (GHPEPGESLEEAAVREVWEETG). Glutamate 46 and glutamate 50 together coordinate Mg(2+). Substrate contacts are provided by residues 66–68 (YVN), arginine 74, and glutamate 112.

Belongs to the Nudix hydrolase family. In terms of assembly, monomer. Requires Mg(2+) as cofactor.

It carries out the reaction P(1),P(6)-bis(5'-adenosyl) hexaphosphate + H2O = 2 ATP + 2 H(+). The enzyme catalyses P(1),P(5)-bis(5'-adenosyl) pentaphosphate + H2O = ADP + ATP + 2 H(+). The catalysed reaction is P(1),P(4)-bis(5'-adenosyl) tetraphosphate + H2O = AMP + ATP + 2 H(+). Its activity is regulated as follows. Strongly inhibited by fluoride ions. In terms of biological role, specifically hydrolyzes (di)adenosine polyphosphates but not ATP or diadenosine triphosphate, generating ATP as the product. Diadenosine hexaphosphate (Ap6A) is the preferred substrate and hydrolysis yields 2 ATP. It is the only enzyme that symmetrically hydrolyzes Ap6A. It also hydrolyzes diadenosine pentaphosphate (Ap5A), diadenosine tetraphosphate (Ap4A) and adenosine tetraphosphate (p4A). The sequence is that of Diadenosine hexaphosphate hydrolase from Thermus thermophilus.